The sequence spans 116 residues: Protein Rev (116 aa).

Phosphoserine; by host CK2 is present on residues Ser-5 and Ser-8. The segment at 18–26 (LIKVLYQSN) is homomultimerization. The disordered stretch occupies residues 23–48 (YQSNPPPSSEGTRQARRNRRRRWRER). The Nuclear localization signal and RNA-binding (RRE) motif lies at 34 to 50 (TRQARRNRRRRWRERQR). Residues 36–47 (QARRNRRRRWRE) show a composition bias toward basic residues. The short motif at 73 to 84 (FQLPPLERLTLD) is the Nuclear export signal and binding to XPO1 element. Residues 90–116 (GTSGTQGVGSPQILVESPPVLDSGTKE) are disordered. Ser-92 and Ser-99 each carry phosphoserine; by host.

This sequence belongs to the HIV-1 REV protein family. As to quaternary structure, homomultimer; when bound to the RRE. Multimeric assembly is essential for activity and may involve XPO1. Binds to human KPNB1, XPO1, TNPO1, RANBP5 and IPO7. Interacts with the viral Integrase. Interacts with human KHDRBS1. Interacts with human NAP1; this interaction decreases Rev multimerization and stimulates its activity. Interacts with human DEAD-box helicases DDX3 and DDX24; these interactions may serve for viral RNA export to the cytoplasm and packaging, respectively. Interacts with human PSIP1; this interaction may inhibit HIV-1 DNA integration by promoting dissociation of the Integrase-LEDGF/p75 complex. Post-translationally, asymmetrically arginine dimethylated at one site by host PRMT6. Methylation impairs the RNA-binding activity and export of viral RNA from the nucleus to the cytoplasm. Phosphorylated by protein kinase CK2. Presence of, and maybe binding to the N-terminus of the regulatory beta subunit of CK2 is necessary for CK2-mediated Rev's phosphorylation.

It localises to the host nucleus. The protein localises to the host nucleolus. It is found in the host cytoplasm. In terms of biological role, escorts unspliced or incompletely spliced viral pre-mRNAs (late transcripts) out of the nucleus of infected cells. These pre-mRNAs carry a recognition sequence called Rev responsive element (RRE) located in the env gene, that is not present in fully spliced viral mRNAs (early transcripts). This function is essential since most viral proteins are translated from unspliced or partially spliced pre-mRNAs which cannot exit the nucleus by the pathway used by fully processed cellular mRNAs. Rev itself is translated from a fully spliced mRNA that readily exits the nucleus. Rev's nuclear localization signal (NLS) binds directly to KPNB1/Importin beta-1 without previous binding to KPNA1/Importin alpha-1. KPNB1 binds to the GDP bound form of RAN (Ran-GDP) and targets Rev to the nucleus. In the nucleus, the conversion from Ran-GDP to Ran-GTP dissociates Rev from KPNB1 and allows Rev's binding to the RRE in viral pre-mRNAs. Rev multimerization on the RRE via cooperative assembly exposes its nuclear export signal (NES) to the surface. Rev can then form a complex with XPO1/CRM1 and Ran-GTP, leading to nuclear export of the complex. Conversion from Ran-GTP to Ran-GDP mediates dissociation of the Rev/RRE/XPO1/RAN complex, so that Rev can return to the nucleus for a subsequent round of export. Beside KPNB1, also seems to interact with TNPO1/Transportin-1, RANBP5/IPO5 and IPO7/RANBP7 for nuclear import. The nucleoporin-like HRB/RIP is an essential cofactor that probably indirectly interacts with Rev to release HIV RNAs from the perinuclear region to the cytoplasm. In Human immunodeficiency virus type 1 group M subtype B (isolate YU-2) (HIV-1), this protein is Protein Rev.